We begin with the raw amino-acid sequence, 136 residues long: UPF0213 protein ASA_0550 (136 aa).

Residues 17-92 (GQWSIYLVRT…KQQSKAFKER (76 aa)) form the GIY-YIG domain.

The protein belongs to the UPF0213 family.

The protein is UPF0213 protein ASA_0550 of Aeromonas salmonicida (strain A449).